A 425-amino-acid polypeptide reads, in one-letter code: Alpha-muurolene synthase (425 aa).

Asp-97, Asp-101, Asn-240, Ser-244, and Glu-248 together coordinate Mg(2+). The DDXXD motif motif lies at 97-101; that stretch reads DNISD. The disordered stretch occupies residues 348–382; the sequence is VAPPPPPPPPTPPPQSSDADTKKQKVKAQDGKGPV. Positions 349–362 are enriched in pro residues; the sequence is APPPPPPPPTPPPQ. Residues 366 to 377 show a composition bias toward basic and acidic residues; that stretch reads ADTKKQKVKAQD.

Belongs to the terpene synthase family. The cofactor is Mg(2+).

It catalyses the reaction (2E,6E)-farnesyl diphosphate = alpha-muurolene + diphosphate. The catalysed reaction is (2E,6E)-farnesyl diphosphate = gamma-muurolene + diphosphate. The enzyme catalyses (2E,6E)-farnesyl diphosphate = (+)-(R)-germacrene A + diphosphate. Its function is as follows. Sesquiterpene synthase that catalyzes the formation of alpha-muurolene, and at lower level (+)-(R)-germacrene A and gamma-muurolene. The sequence is that of Alpha-muurolene synthase (COP3) from Coprinopsis cinerea (strain Okayama-7 / 130 / ATCC MYA-4618 / FGSC 9003) (Inky cap fungus).